Here is a 625-residue protein sequence, read N- to C-terminus: Alpha-1,3-galactosidase A (625 aa).

Positions 1-32 (MAHGCSGGAMSRFVFLGVALALLGGATSPAAA) are cleaved as a signal peptide. 5 PbH1 repeats span residues 342–364 (KGKVSITRSLFDGPHDDPINIHG), 460–482 (TPSVVISGNVFRNVPTRGILVTT), 483–505 (RKPVLITGNRFDGMSMASIYVSA), 516–537 (VADLTIRGNSFTRPSGPVIFVE), and 573–611 (VGGFAFTGNTVRRLDGADHPPYTSPLFVFHGSSGIRIAR).

It belongs to the glycosyl hydrolase 110 family. A subfamily.

It catalyses the reaction Hydrolysis of terminal, non-reducing branched (1-&gt;3)-alpha-D-galactosidic residues, producing free D-galactose.. The enzyme catalyses Hydrolysis of terminal, non-reducing alpha-D-galactose residues in alpha-D-galactosides, including galactose oligosaccharides, galactomannans and galactolipids.. Functionally, alpha-galactosidase that specifically removes branched alpha-1,3-linked galactose residues present in blood group B antigens. Has no activity toward linear alpha-1,3-linked galactose residues. This Streptomyces avermitilis (strain ATCC 31267 / DSM 46492 / JCM 5070 / NBRC 14893 / NCIMB 12804 / NRRL 8165 / MA-4680) protein is Alpha-1,3-galactosidase A (glaA).